We begin with the raw amino-acid sequence, 304 residues long: ATP synthase gamma chain (304 aa).

This sequence belongs to the ATPase gamma chain family. F-type ATPases have 2 components, CF(1) - the catalytic core - and CF(0) - the membrane proton channel. CF(1) has five subunits: alpha(3), beta(3), gamma(1), delta(1), epsilon(1). CF(0) has three main subunits: a, b and c.

The protein localises to the cell membrane. Functionally, produces ATP from ADP in the presence of a proton gradient across the membrane. The gamma chain is believed to be important in regulating ATPase activity and the flow of protons through the CF(0) complex. This is ATP synthase gamma chain from Chloroherpeton thalassium (strain ATCC 35110 / GB-78).